A 454-amino-acid chain; its full sequence is Glutamate--tRNA ligase (454 aa).

Residues 7-17 (PSPTGCLHIGG) carry the 'HIGH' region motif. The Zn(2+) site is built by Cys-96, Cys-98, Cys-123, and Asp-125. A 'KMSKS' region motif is present at residues 230–234 (RLSKR). Lys-233 contacts ATP.

Belongs to the class-I aminoacyl-tRNA synthetase family. Glutamate--tRNA ligase type 1 subfamily. In terms of assembly, monomer. The cofactor is Zn(2+).

It localises to the cytoplasm. The enzyme catalyses tRNA(Glu) + L-glutamate + ATP = L-glutamyl-tRNA(Glu) + AMP + diphosphate. Functionally, catalyzes the attachment of glutamate to tRNA(Glu) in a two-step reaction: glutamate is first activated by ATP to form Glu-AMP and then transferred to the acceptor end of tRNA(Glu). The polypeptide is Glutamate--tRNA ligase (Ruthia magnifica subsp. Calyptogena magnifica).